A 156-amino-acid polypeptide reads, in one-letter code: SsrA-binding protein (156 aa).

It belongs to the SmpB family.

The protein resides in the cytoplasm. Required for rescue of stalled ribosomes mediated by trans-translation. Binds to transfer-messenger RNA (tmRNA), required for stable association of tmRNA with ribosomes. tmRNA and SmpB together mimic tRNA shape, replacing the anticodon stem-loop with SmpB. tmRNA is encoded by the ssrA gene; the 2 termini fold to resemble tRNA(Ala) and it encodes a 'tag peptide', a short internal open reading frame. During trans-translation Ala-aminoacylated tmRNA acts like a tRNA, entering the A-site of stalled ribosomes, displacing the stalled mRNA. The ribosome then switches to translate the ORF on the tmRNA; the nascent peptide is terminated with the 'tag peptide' encoded by the tmRNA and targeted for degradation. The ribosome is freed to recommence translation, which seems to be the essential function of trans-translation. Required for trans-translation. Probably required for sporulation; deletion of the gene for tmRNA impairs sporulation via its effect on trans-translation, and as smpB is required for trans-translation under non-stress conditions, it is also probably required during sporulation. The sequence is that of SsrA-binding protein from Bacillus subtilis (strain 168).